Consider the following 79-residue polypeptide: DNA-directed RNA polymerase subunit omega (79 aa).

It belongs to the RNA polymerase subunit omega family. The RNAP catalytic core consists of 2 alpha, 1 beta, 1 beta' and 1 omega subunit. When a sigma factor is associated with the core the holoenzyme is formed, which can initiate transcription.

The catalysed reaction is RNA(n) + a ribonucleoside 5'-triphosphate = RNA(n+1) + diphosphate. In terms of biological role, promotes RNA polymerase assembly. Latches the N- and C-terminal regions of the beta' subunit thereby facilitating its interaction with the beta and alpha subunits. In Bdellovibrio bacteriovorus (strain ATCC 15356 / DSM 50701 / NCIMB 9529 / HD100), this protein is DNA-directed RNA polymerase subunit omega.